Here is a 197-residue protein sequence, read N- to C-terminus: dITP/XTP pyrophosphatase (197 aa).

A substrate-binding site is contributed by 11–16 (SHNAGK). The Mg(2+) site is built by Glu42 and Asp71. Catalysis depends on Asp71, which acts as the Proton acceptor. Substrate contacts are provided by residues Ser72, 155–158 (FGYD), Lys178, and 183–184 (HR).

It belongs to the HAM1 NTPase family. Homodimer. Requires Mg(2+) as cofactor.

It catalyses the reaction XTP + H2O = XMP + diphosphate + H(+). It carries out the reaction dITP + H2O = dIMP + diphosphate + H(+). The catalysed reaction is ITP + H2O = IMP + diphosphate + H(+). Pyrophosphatase that catalyzes the hydrolysis of nucleoside triphosphates to their monophosphate derivatives, with a high preference for the non-canonical purine nucleotides XTP (xanthosine triphosphate), dITP (deoxyinosine triphosphate) and ITP. Seems to function as a house-cleaning enzyme that removes non-canonical purine nucleotides from the nucleotide pool, thus preventing their incorporation into DNA/RNA and avoiding chromosomal lesions. The sequence is that of dITP/XTP pyrophosphatase from Pseudomonas aeruginosa (strain ATCC 15692 / DSM 22644 / CIP 104116 / JCM 14847 / LMG 12228 / 1C / PRS 101 / PAO1).